Reading from the N-terminus, the 209-residue chain is N-acetyltransferase aca1 (209 aa).

In terms of domain architecture, N-acetyltransferase spans 26–202 (TNVKNKEELL…DAYIYQYHFP (177 aa)). Asparagine 118 contacts substrate. CoA is bound at residue 128–133 (RSKGIG). Substrate is bound at residue 155 to 156 (NL).

The protein belongs to the acetyltransferase family. Homodimer.

The protein resides in the cytoplasm. It localises to the mitochondrion. The enzyme catalyses L-glutamate 5-semialdehyde + acetyl-CoA = N-acetyl-L-glutamate 5-semialdehyde + CoA + H(+). Its function is as follows. N-acetyltransferase involved in oxidative stress resistance. Acetylates the toxic proline metabolism intermediate (S)-1-pyrroline-5-carboxylate (P5C), or more likely its spontaneously forming tautomer glutamate-5-semialdehyde (GSA) into N-acetyl-GSA for arginine synthesis in the mitochondria. P5C has been shown to increase the levels of reactive oxygen species (ROS) in the cell by inhibiting the function of the respiratory chain in the mitochondria. The enzyme is able to reduce intracellular ROS levels under P5C-induced oxidative stress and protects cells from damage by oxidative stress. Also acetylates and thereby detoxifies the proline analog azetidine-2-carboxylate (AZC), however it is unlikely that AZC is a natural substrate as it occurs only in plants belonging to the Lilaceae family. The polypeptide is N-acetyltransferase aca1 (Schizosaccharomyces pombe (strain 972 / ATCC 24843) (Fission yeast)).